The sequence spans 101 residues: Large ribosomal subunit protein bL28 (101 aa).

Belongs to the bacterial ribosomal protein bL28 family.

This is Large ribosomal subunit protein bL28 from Rhodopseudomonas palustris (strain BisB5).